A 402-amino-acid chain; its full sequence is Indole-3-glycerol phosphate synthase, chloroplastic (402 aa).

Residues 1–65 constitute a chloroplast transit peptide; it reads MEGLVPVQRL…SDLKESLAVS (65 aa).

This sequence belongs to the TrpC family. In terms of tissue distribution, expressed in leaves.

Its subcellular location is the plastid. The protein resides in the chloroplast. The enzyme catalyses 1-(2-carboxyphenylamino)-1-deoxy-D-ribulose 5-phosphate + H(+) = (1S,2R)-1-C-(indol-3-yl)glycerol 3-phosphate + CO2 + H2O. It functions in the pathway amino-acid biosynthesis; L-tryptophan biosynthesis; L-tryptophan from chorismate: step 4/5. In terms of biological role, indole-3-glycerol phosphate synthase required for tryptophan biosynthesis. This Arabidopsis thaliana (Mouse-ear cress) protein is Indole-3-glycerol phosphate synthase, chloroplastic.